The chain runs to 295 residues: ATP synthase gamma chain (295 aa).

Belongs to the ATPase gamma chain family. In terms of assembly, F-type ATPases have 2 components, CF(1) - the catalytic core - and CF(0) - the membrane proton channel. CF(1) has five subunits: alpha(3), beta(3), gamma(1), delta(1), epsilon(1). CF(0) has three main subunits: a, b and c.

It is found in the cell inner membrane. Its function is as follows. Produces ATP from ADP in the presence of a proton gradient across the membrane. The gamma chain is believed to be important in regulating ATPase activity and the flow of protons through the CF(0) complex. The chain is ATP synthase gamma chain from Methylorubrum populi (strain ATCC BAA-705 / NCIMB 13946 / BJ001) (Methylobacterium populi).